The chain runs to 957 residues: Plasma membrane ATPase 1 (957 aa).

The Cytoplasmic portion of the chain corresponds to 1–66; sequence MGEEKPEVLD…EKKDSKLLKF (66 aa). Residues 67–86 form a helical membrane-spanning segment; that stretch reads LGFMWNPLSWVMEAAAIMAI. Over 87–98 the chain is Extracellular; sequence ALANGGGKPPDW. A helical membrane pass occupies residues 99-119; sequence QDFVGIITLLIINSTISFIEE. Residues 120-248 lie on the Cytoplasmic side of the membrane; sequence NNAGNAAAAL…GHFQKVLTAI (129 aa). A helical membrane pass occupies residues 249-269; it reads GNFCICSIAVGMIIEIIVMYP. Residues 270–279 are Extracellular-facing; that stretch reads IQHRAYRPGI. The helical transmembrane segment at 280 to 301 threads the bilayer; it reads DNLLVLLIGGIPIAMPTVLSVT. Over 302-648 the chain is Cytoplasmic; sequence MAIGSHRLAQ…TSRAIFQRMK (347 aa). Asp334 (4-aspartylphosphate intermediate) is an active-site residue. Mg(2+)-binding residues include Asp593 and Asp597. Residues 649-670 traverse the membrane as a helical segment; sequence NYTIYAVSITIRIVLGFMLLAL. The Extracellular segment spans residues 671–675; sequence IWKFD. Residues 676–698 form a helical membrane-spanning segment; sequence FPPFMVLIIAILNDGTIMTISKD. The Cytoplasmic portion of the chain corresponds to 699–714; it reads RVKPSPLPDSWKLAEI. The chain crosses the membrane as a helical span at residues 715-735; that stretch reads FTTGIVLGGYLAMMTVIFFWA. At 736-760 the chain is on the extracellular side; it reads AYKTNFFPHVFGVSTLEKTATDDFR. The helical transmembrane segment at 761-781 threads the bilayer; sequence KLASAIYLQVSIISQALIFVT. The Cytoplasmic portion of the chain corresponds to 782-793; the sequence is RSRSWSFVERPG. A helical membrane pass occupies residues 794–814; it reads FLLVIAFVIAQLVATLIAVYA. Over 815–823 the chain is Extracellular; it reads NWSFAAIEG. Residues 824-844 form a helical membrane-spanning segment; the sequence is IGWGWAGVIWIYNLVFYIPLD. Topologically, residues 845-957 are cytoplasmic; sequence IIKFFIRYAL…IETIQQAYTV (113 aa).

This sequence belongs to the cation transport ATPase (P-type) (TC 3.A.3) family. Type IIIA subfamily. Expressed in roots, stems, leaves from both vegetative and flowering plants, and flowers at early and late stages of development with highest expression levels found in flowers and stem.

It is found in the cell membrane. The catalysed reaction is ATP + H2O + H(+)(in) = ADP + phosphate + 2 H(+)(out). The plasma membrane ATPase of plants and fungi is a hydrogen ion pump. The proton gradient it generates drives the active transport of nutrients by H(+)-symport. The resulting external acidification and/or internal alkinization may mediate growth responses. The sequence is that of Plasma membrane ATPase 1 (PMA1) from Nicotiana plumbaginifolia (Leadwort-leaved tobacco).